The sequence spans 747 residues: Probable cyclic nucleotide-gated ion channel 6 (747 aa).

The Cytoplasmic segment spans residues 1–117 (MFDTCGPKGV…DKFLLLCNKL (117 aa)). Residues 118–138 (FVASCILAVSVDPLFLYLPFI) form a helical membrane-spanning segment. Residues 139–150 (NDKAKCVGIDRK) lie on the Extracellular side of the membrane. A helical membrane pass occupies residues 151–171 (LAIIVTTIRTVIDSFYLFHMA). The Cytoplasmic segment spans residues 172–205 (LRFRTAYVAPSSRVFGRGELVIDPAQIAKRYLQQ). Residues 206 to 226 (YFIIDLLSVLPVPQIIVWRFL) traverse the membrane as a helical segment. Residues 227–239 (YTSRGANVLATKQ) lie on the Extracellular side of the membrane. The chain crosses the membrane as a helical span at residues 240-260 (ALRYIVLVQYIPRFLRMYPLS). Over 261-280 (SELKRTAGVFAETAWAGAAY) the chain is Cytoplasmic. A helical membrane pass occupies residues 281-301 (YLLLYMLASHIVGALWYLLAL). The Extracellular portion of the chain corresponds to 302 to 407 (ERNNDCWSKA…GQGLETSTYP (106 aa)). A helical transmembrane segment spans residues 408–428 (GEVIFSITLAIAGLLLFALLI). Residues 429-747 (GNMQTYLQSL…PEPDFSAEDH (319 aa)) are Cytoplasmic-facing. Residues 514–638 (LFEN…SRQV) and Asp585 each bind a nucleoside 3',5'-cyclic phosphate. The segment at 630–645 (FRRLHSRQVQHTFRFY) is calmodulin-binding. Positions 650 to 679 (RTWAACFMQAAWRRYIKRKKLEQLRKEEEE) constitute an IQ domain.

It belongs to the cyclic nucleotide-gated cation channel (TC 1.A.1.5) family. Homotetramer or heterotetramer.

The protein resides in the cell membrane. Probable cyclic nucleotide-gated ion channel. This Arabidopsis thaliana (Mouse-ear cress) protein is Probable cyclic nucleotide-gated ion channel 6 (CNGC6).